The sequence spans 117 residues: Anti-sigma F factor antagonist (117 aa).

The region spanning 2 to 115 is the STAS domain; sequence HFQLEMVTRE…QAIDRVRGIV (114 aa). A Phosphoserine modification is found at S58.

This sequence belongs to the anti-sigma-factor antagonist family. In terms of processing, phosphorylated by SpoIIAB on a serine residue.

Functionally, in the phosphorylated form it could act as an anti-anti-sigma factor that counteracts SpoIIAB and thus releases sigma f from inhibition. This is Anti-sigma F factor antagonist (spoIIAA) from Lysinibacillus sphaericus (Bacillus sphaericus).